The chain runs to 104 residues: ATP-dependent Clp protease adapter protein ClpS (104 aa).

The protein belongs to the ClpS family. As to quaternary structure, binds to the N-terminal domain of the chaperone ClpA.

In terms of biological role, involved in the modulation of the specificity of the ClpAP-mediated ATP-dependent protein degradation. In Nitratidesulfovibrio vulgaris (strain ATCC 29579 / DSM 644 / CCUG 34227 / NCIMB 8303 / VKM B-1760 / Hildenborough) (Desulfovibrio vulgaris), this protein is ATP-dependent Clp protease adapter protein ClpS.